Here is a 621-residue protein sequence, read N- to C-terminus: Membrane protein insertase YidC (621 aa).

6 consecutive transmembrane segments (helical) span residues 1-21 (MDKNTLVGFALIGAVVIGFSI), 363-383 (GWGLSMGVVLLLMTIIVKVLV), 436-456 (MGGCLPMLIQMPVFMALFFFV), 486-506 (IPLLGNHLSLFCLLFSITNIL), 527-547 (LMMYIMPVMFIFIFNGYSSGL), and 549-569 (YYYFISGLIGILTMVILRKTT).

The protein belongs to the OXA1/ALB3/YidC family. Type 1 subfamily. Interacts with the Sec translocase complex via SecD. Specifically interacts with transmembrane segments of nascent integral membrane proteins during membrane integration.

The protein resides in the cell inner membrane. Its function is as follows. Required for the insertion and/or proper folding and/or complex formation of integral membrane proteins into the membrane. Involved in integration of membrane proteins that insert both dependently and independently of the Sec translocase complex, as well as at least some lipoproteins. Aids folding of multispanning membrane proteins. The polypeptide is Membrane protein insertase YidC (Phocaeicola vulgatus (strain ATCC 8482 / DSM 1447 / JCM 5826 / CCUG 4940 / NBRC 14291 / NCTC 11154) (Bacteroides vulgatus)).